Reading from the N-terminus, the 598-residue chain is MRVSRLMLVTLRDVPADAEIASQQLLIRGGFIRRVGSGIYAYLPLMWRVLQRVMRIVREEMNQIGALETLLPQLQPAELWEKSGRWQGYTAGEGIMFHLEDRQERSLGLGPTHEEVITELASDLLRSYRQLPVTLYQIQSKFRDEIRPRFGLMRGREFIMKDAYSFHGDEGDLARMYEEMEKAYTRVFQRCGLTAVGVDADSGAIGGAASQEFMVTADAGEDLILISPDGDYAANQEKAVSIAPPALPLPSGESRVISTPGQVTIDELCSAQSLHPSQVVKVLLLLAKLESGDEQPVLVCLRGDQELNEVKLVNALTQQLDSPVLDLSPINADQVKTQGLQPLPLGSIGPDLSDHSLAGARSWKERFYKLADTTAAELERFVCGANTSNEHRWGASWSDLGTIPAMDLRNAKAGDHCVHRPEQSLEERRGIEVGHIFQLGRKYSLSMGAQITTKEGKQEHLWMGCYGIGISRLAQAAVEQHHDDAGIIWPLSIAPFQVIVVVANVQDEVQMALGEEIYNELLASGIDVLLDDRGERAGVKFKDADLIGIPWRVVVGRAAAEGNVELVKRSERDANVLSRAEAISSLLEAIPTELRIQL.

This sequence belongs to the class-II aminoacyl-tRNA synthetase family. ProS type 1 subfamily. As to quaternary structure, homodimer.

It localises to the cytoplasm. It carries out the reaction tRNA(Pro) + L-proline + ATP = L-prolyl-tRNA(Pro) + AMP + diphosphate. Catalyzes the attachment of proline to tRNA(Pro) in a two-step reaction: proline is first activated by ATP to form Pro-AMP and then transferred to the acceptor end of tRNA(Pro). As ProRS can inadvertently accommodate and process non-cognate amino acids such as alanine and cysteine, to avoid such errors it has two additional distinct editing activities against alanine. One activity is designated as 'pretransfer' editing and involves the tRNA(Pro)-independent hydrolysis of activated Ala-AMP. The other activity is designated 'posttransfer' editing and involves deacylation of mischarged Ala-tRNA(Pro). The misacylated Cys-tRNA(Pro) is not edited by ProRS. This is Proline--tRNA ligase from Synechococcus sp. (strain CC9311).